The primary structure comprises 395 residues: ATP synthase subunit a (395 aa).

Helical transmembrane passes span 153–173 (FTNP…LVYF), 246–266 (HFLI…IVGF), 273–293 (FLSF…LVLL), 313–333 (MMAG…MLCM), and 339–359 (FIGD…ELGV).

It belongs to the ATPase A chain family. F-type ATPases have 2 components, CF(1) - the catalytic core - and CF(0) - the membrane proton channel. CF(1) has five subunits: alpha(3), beta(3), gamma(1), delta(1), epsilon(1). CF(0) has three main subunits: a, b and c.

Its subcellular location is the mitochondrion inner membrane. In terms of biological role, mitochondrial membrane ATP synthase (F(1)F(0) ATP synthase or Complex V) produces ATP from ADP in the presence of a proton gradient across the membrane which is generated by electron transport complexes of the respiratory chain. F-type ATPases consist of two structural domains, F(1) - containing the extramembraneous catalytic core and F(0) - containing the membrane proton channel, linked together by a central stalk and a peripheral stalk. During catalysis, ATP synthesis in the catalytic domain of F(1) is coupled via a rotary mechanism of the central stalk subunits to proton translocation. Key component of the proton channel; it may play a direct role in the translocation of protons across the membrane. This Nicotiana tabacum (Common tobacco) protein is ATP synthase subunit a (ATP6).